The following is a 236-amino-acid chain: Uridylate kinase (236 aa).

Lys-10–Gly-13 contacts ATP. Position 52 (Gly-52) interacts with UMP. 2 residues coordinate ATP: Gly-53 and Arg-57. Residues Asp-72 and Thr-133 to Thr-140 contribute to the UMP site. The ATP site is built by Thr-160, Tyr-166, and Asp-169.

Belongs to the UMP kinase family. In terms of assembly, homohexamer.

It is found in the cytoplasm. The catalysed reaction is UMP + ATP = UDP + ADP. It participates in pyrimidine metabolism; CTP biosynthesis via de novo pathway; UDP from UMP (UMPK route): step 1/1. With respect to regulation, inhibited by UTP. Functionally, catalyzes the reversible phosphorylation of UMP to UDP. The protein is Uridylate kinase of Cupriavidus necator (strain ATCC 17699 / DSM 428 / KCTC 22496 / NCIMB 10442 / H16 / Stanier 337) (Ralstonia eutropha).